Consider the following 335-residue polypeptide: DNA-directed RNA polymerase subunit alpha (335 aa).

The tract at residues 1–248 (MTIQTSRTLS…GLFAPLQEVS (248 aa)) is alpha N-terminal domain (alpha-NTD). The tract at residues 256 to 335 (KPDEDNQKNQ…LPRTREKGKA (80 aa)) is alpha C-terminal domain (alpha-CTD).

It belongs to the RNA polymerase alpha chain family. In terms of assembly, in cyanobacteria the RNAP catalytic core is composed of 2 alpha, 1 beta, 1 beta', 1 gamma and 1 omega subunit. When a sigma factor is associated with the core the holoenzyme is formed, which can initiate transcription.

The enzyme catalyses RNA(n) + a ribonucleoside 5'-triphosphate = RNA(n+1) + diphosphate. DNA-dependent RNA polymerase catalyzes the transcription of DNA into RNA using the four ribonucleoside triphosphates as substrates. The protein is DNA-directed RNA polymerase subunit alpha of Synechococcus sp. (strain JA-2-3B'a(2-13)) (Cyanobacteria bacterium Yellowstone B-Prime).